Here is a 340-residue protein sequence, read N- to C-terminus: Glutaminase 2 (340 aa).

The substrate site is built by S89, N140, N191, Y215, and Y267.

This sequence belongs to the glutaminase family. As to quaternary structure, homotetramer.

It catalyses the reaction L-glutamine + H2O = L-glutamate + NH4(+). This chain is Glutaminase 2, found in Yersinia pestis.